The chain runs to 105 residues: MSEEELEQDELDGADEDDGEELAAADDGEADSSDGDEAPAPGKKAKAAVVEEELPSVEAKQKERDALAKAMEEFLSRGGKVQEIEPNVVADPPKKPDSKYGSRPI.

Over residues 1-37 the composition is skewed to acidic residues; that stretch reads MSEEELEQDELDGADEDDGEELAAADDGEADSSDGDE. The disordered stretch occupies residues 1 to 105; it reads MSEEELEQDE…PDSKYGSRPI (105 aa). Basic and acidic residues-rich tracts occupy residues 59–83 and 92–105; these read AKQKERDALAKAMEEFLSRGGKVQE and PPKKPDSKYGSRPI.

Interacts with RNA polymerase.

Its function is as follows. Causes widespread changes in gene expression, and plays a direct role in the regulation of genes encoding ribosomal components. Associates with chromosomal DNA through interaction with RNA polymerase. Contributes to biofilm formation and secondary metabolite production. Important during transitions to and from the survival state. In Pseudomonas aeruginosa (strain UCBPP-PA14), this protein is Transcriptional regulator SutA.